The following is a 263-amino-acid chain: Acyl-[acyl-carrier-protein]--UDP-N-acetylglucosamine O-acyltransferase (263 aa).

The protein belongs to the transferase hexapeptide repeat family. LpxA subfamily. As to quaternary structure, homotrimer.

The protein resides in the cytoplasm. The enzyme catalyses a (3R)-hydroxyacyl-[ACP] + UDP-N-acetyl-alpha-D-glucosamine = a UDP-3-O-[(3R)-3-hydroxyacyl]-N-acetyl-alpha-D-glucosamine + holo-[ACP]. It participates in glycolipid biosynthesis; lipid IV(A) biosynthesis; lipid IV(A) from (3R)-3-hydroxytetradecanoyl-[acyl-carrier-protein] and UDP-N-acetyl-alpha-D-glucosamine: step 1/6. Involved in the biosynthesis of lipid A, a phosphorylated glycolipid that anchors the lipopolysaccharide to the outer membrane of the cell. This chain is Acyl-[acyl-carrier-protein]--UDP-N-acetylglucosamine O-acyltransferase, found in Campylobacter jejuni subsp. jejuni serotype O:6 (strain 81116 / NCTC 11828).